Here is a 1294-residue protein sequence, read N- to C-terminus: Voltage-gated inwardly rectifying potassium channel KCNH2 (1294 aa).

The Cytoplasmic portion of the chain corresponds to 1–377 (RKFIIANARV…RIHRWTILHY (377 aa)). Residues 15-44 (VIYCNDGFCELCGYSRAEVMQRPCTCDFLH) enclose the PAS domain. A PAC domain is found at 66–118 (RKVEIAFYRKDGSCFLCLVDVVPVKNEDGAVIMFILNFEVVMEKDMVGSPARD). The tract at residues 207-258 (LVAPGSPPSSVPGPPHTSPRAHSLNPDASGSSCSLARTRSRESCASVRRASS) is disordered. The span at 211–223 (GSPPSSVPGPPHT) shows a compositional bias: pro residues. Residues Ser212 and Ser216 each carry the phosphoserine modification. The span at 232 to 243 (PDASGSSCSLAR) shows a compositional bias: polar residues. Residues Ser257, Ser258, Ser294, and Ser325 each carry the phosphoserine modification. A helical transmembrane segment spans residues 378–398 (SPFKAVWDWLILLLVIYTAVF). Over 399 to 424 (TPYSAAFLLKEPEEDAQTADCGYACQ) the chain is Extracellular. The helical transmembrane segment at 425 to 445 (PLAVVDLIVDIMFIVDILINF) threads the bilayer. The Cytoplasmic portion of the chain corresponds to 446-469 (RTTYVNANEEVVSHPGRIAVHYFK). The helical transmembrane segment at 470 to 490 (GWFLIDMVAAIPFDLLIFGSG) threads the bilayer. Over 491–494 (SEEL) the chain is Extracellular. The helical; Voltage-sensor transmembrane segment at 495-515 (IGLLKTARLLRLVRVARKLDR) threads the bilayer. Residues 516–521 (YSEYGA) lie on the Cytoplasmic side of the membrane. Residues 522–542 (AVLFLLMCTFALIAHWLACIW) form a helical membrane-spanning segment. At 543-585 (YAIGNMEQPDMNSRIGWLHNLGDQIGKPYNSSGLGGPSIKDKY) the chain is on the extracellular side. Positions 586 to 606 (VTALYFTFSSLTSVGFGNVSP) form an intramembrane region, pore-forming. The Selectivity filter signature appears at 598-603 (SVGFGN). Over 607-612 (NTNSEK) the chain is Extracellular. Residues 613–633 (IFSICVMLIGSLMYASIFGNV) form a helical membrane-spanning segment. Residues 634–1294 (SAIIQRLYSG…IAHWLACIWY (661 aa)) are Cytoplasmic-facing. The cNMP-binding domain stretch occupies residues 716–816 (PFRGATKGCL…IHRDDLLEVL (101 aa)). Residues 844–956 (GSPGSTELEG…LTEDGDKSDT (113 aa)) form a disordered region. 2 positions are modified to phosphoserine: Ser845 and Ser848. The span at 857–866 (RQRRRKLSFR) shows a compositional bias: basic residues. Residues 902–913 (GDSPSSGPSSPE) are compositionally biased toward low complexity. Arg987 bears the Omega-N-methylarginine mark. A coiled-coil region spans residues 1008–1035 (RGDVESRLDALQRQLNRLETRLSADMAT). Ser1110 bears the Phosphoserine mark.

The protein belongs to the potassium channel family. H (Eag) (TC 1.A.1.20) subfamily. Kv11.1/KCNH2 sub-subfamily. The potassium channel is probably composed of a homo- or heterotetrameric complex of pore-forming alpha subunits that can associate with modulating beta subunits. Interacts with DNAJB12 and DNAJB14; chaperones DNAJB12 and DNAJB14 promote tetramerization. Heteromultimer with KCNH6/ERG2 and KCNH7/ERG3. Interacts with ALG10B. Forms a stable complex with KCNE1 or KCNE2, and that this heteromultimerization regulates Inward rectifier potassium channel activity. Interacts with CANX. The core-glycosylated, but not the fully glycosylated form interacts with RNF207. Interacts with NDFIP1 and NDFIP2; this interaction decreases the cell membrane expression by targeting KCNH2, through interaction with NEDD4L, for the degradation through the multivesicular bodies (MVBs)-lysosomal pathway. In terms of processing, phosphorylated on serine and threonine residues. Phosphorylation by PKA inhibits ion conduction. In terms of tissue distribution, highly expressed in heart and brain.

It localises to the cell membrane. The enzyme catalyses K(+)(in) = K(+)(out). Pore-forming (alpha) subunit of voltage-gated inwardly rectifying potassium channel. Characterized by unusual gating kinetics by producing relatively small outward currents during membrane depolarization and large inward currents during subsequent repolarization which reflect a rapid inactivation during depolarization and quick recovery from inactivation but slow deactivation (closing) during repolarization. Channel properties are modulated by cAMP and subunit assembly. Forms a stable complex with KCNE1 or KCNE2, and that this heteromultimerization regulates inward rectifier potassium channel activity. The polypeptide is Voltage-gated inwardly rectifying potassium channel KCNH2 (Cavia porcellus (Guinea pig)).